The following is a 277-amino-acid chain: Formamidopyrimidine-DNA glycosylase (277 aa).

P2 acts as the Schiff-base intermediate with DNA in catalysis. E3 (proton donor) is an active-site residue. K60 (proton donor; for beta-elimination activity) is an active-site residue. DNA contacts are provided by H94, R113, and R156. Residues 241–275 (KVYNREGLPCPHCGKPIQRIKVAGRSSYYCSSCQK) form an FPG-type zinc finger. Catalysis depends on R265, which acts as the Proton donor; for delta-elimination activity.

This sequence belongs to the FPG family. In terms of assembly, monomer. The cofactor is Zn(2+).

It catalyses the reaction Hydrolysis of DNA containing ring-opened 7-methylguanine residues, releasing 2,6-diamino-4-hydroxy-5-(N-methyl)formamidopyrimidine.. The enzyme catalyses 2'-deoxyribonucleotide-(2'-deoxyribose 5'-phosphate)-2'-deoxyribonucleotide-DNA = a 3'-end 2'-deoxyribonucleotide-(2,3-dehydro-2,3-deoxyribose 5'-phosphate)-DNA + a 5'-end 5'-phospho-2'-deoxyribonucleoside-DNA + H(+). Its function is as follows. Involved in base excision repair of DNA damaged by oxidation or by mutagenic agents. Acts as a DNA glycosylase that recognizes and removes damaged bases. Has a preference for oxidized purines, such as 7,8-dihydro-8-oxoguanine (8-oxoG). Has AP (apurinic/apyrimidinic) lyase activity and introduces nicks in the DNA strand. Cleaves the DNA backbone by beta-delta elimination to generate a single-strand break at the site of the removed base with both 3'- and 5'-phosphates. This Desulforamulus reducens (strain ATCC BAA-1160 / DSM 100696 / MI-1) (Desulfotomaculum reducens) protein is Formamidopyrimidine-DNA glycosylase.